The primary structure comprises 279 residues: MFPYVEDYDGYAVKRLMLENVDVLGYLSLGYLALVWKGPAVVRRLNGETNRVSNSGLLRYAIIVWNLLLSAFSFFGMIVVVPAFLTRISQRGMLRALCGNNDEMFYRSSAGFWIGMFVLSKAPELVDTMFLLLQGKTPPFLHWYHHVTVLIFSWHTYCDHTSTMVLFAAMNLTVHFIMYFYFAMCACGFKKTMRKFAPFITMLQILQMVVGSLVTTYSAYKVYTTPEGAAPGCHVSRANARMGVIMYMSYLYLFSEMFLNSYARPKKPVADPTAAGKKV.

7 helical membrane passes run 16 to 36, 61 to 81, 112 to 132, 138 to 158, 164 to 184, 196 to 216, and 242 to 262; these read LMLE…ALVW, AIIV…IVVV, FWIG…MFLL, PPFL…HTYC, MVLF…YFAM, FAPF…LVTT, and MGVI…LNSY. The HxxHH motif signature appears at 142-146; it reads HWYHH. Histidine 145 acts as the Nucleophile in catalysis.

Belongs to the ELO family.

Its subcellular location is the endoplasmic reticulum membrane. The catalysed reaction is an acyl-CoA + malonyl-CoA + H(+) = a 3-oxoacyl-CoA + CO2 + CoA. Its pathway is lipid metabolism; fatty acid biosynthesis. In terms of biological role, involved in the synthesis of fatty acids. Elongates C10 fatty acids to C14. Required for the maintenance of the global lipidome profile in this parasite. The polypeptide is Fatty acid elongase 2 (Trypanosoma cruzi (strain CL Brener)).